The chain runs to 105 residues: Malonate decarboxylase acyl carrier protein (105 aa).

Residue serine 28 is modified to O-(phosphoribosyl dephospho-coenzyme A)serine.

This sequence belongs to the MdcC family. Covalently binds the prosthetic group of malonate decarboxylase.

The protein resides in the cytoplasm. Functionally, subunit of malonate decarboxylase, it is an acyl carrier protein to which acetyl and malonyl thioester residues are bound via a 2'-(5''-phosphoribosyl)-3'-dephospho-CoA prosthetic group and turn over during the catalytic mechanism. This chain is Malonate decarboxylase acyl carrier protein, found in Xanthomonas euvesicatoria pv. vesicatoria (strain 85-10) (Xanthomonas campestris pv. vesicatoria).